A 91-amino-acid chain; its full sequence is Potassium channel toxin AaTXK-beta (91 aa).

Residues 1–19 form the signal peptide; that stretch reads MQRNLVVLLFLGMVALSSC. A propeptide spanning residues 20–27 is cleaved from the precursor; it reads GLREKHVQ. The BetaSPN-type CS-alpha/beta domain maps to 54 to 91; it reads QFGCPAYQGYCDDHCQDIKKEEGFCHGFKCKCGIPMGF. 3 disulfide bridges follow: C57/C78, C64/C83, and C68/C85.

This sequence belongs to the long chain scorpion toxin family. Class 1 subfamily. As to quaternary structure, monomer (both chains). As to expression, expressed by the venom gland.

Its subcellular location is the secreted. In terms of biological role, inhibits voltage-gated potassium channels (Kv). Does not activate Kv7 channels. Its function is as follows. Peptide activator of Kv7.4/KCNQ4 channels. Also acts as a subtype-selective activator of channels formed by Kv7.3/KCNQ3, Kv7.2/Kv7.3 (KCNQ2/KCNQ3), Kv7.5/Kv7.3 (KCNQ3/KCNQ5) subunits. This is Potassium channel toxin AaTXK-beta from Androctonus australis (Sahara scorpion).